A 468-amino-acid polypeptide reads, in one-letter code: E3 ubiquitin-protein ligase TRIM11 (468 aa).

The RING-type zinc-finger motif lies at C16–R57. S85 is modified (phosphoserine). The B box-type zinc-finger motif lies at V87 to L128. Zn(2+)-binding residues include C92, H95, C114, and H120. A coiled-coil region spans residues L128 to E233. The 194-residue stretch at E268–P461 folds into the B30.2/SPRY domain. K458 is covalently cross-linked (Glycyl lysine isopeptide (Lys-Gly) (interchain with G-Cter in ubiquitin)).

The protein belongs to the TRIM/RBCC family. In terms of assembly, binds cytoplasmic tail of integrin alpha-1. Interacts with the HN peptide. Interacts with PHOX2B. Interacts (when autoubiquitinated) with SQSTM1/p62; promoting AIM2 recruitment to autophagosomes. Interacts with AIM2; promoting its autophagy-dependent degradation. Autoubiquitinated upon DNA stimulation; autoubiquitination promotes interaction with SQSTM1/p62 and recruitment of AIM2 to autophagosomes.

Its subcellular location is the cytoplasm. It localises to the nucleus. The enzyme catalyses S-ubiquitinyl-[E2 ubiquitin-conjugating enzyme]-L-cysteine + [acceptor protein]-L-lysine = [E2 ubiquitin-conjugating enzyme]-L-cysteine + N(6)-ubiquitinyl-[acceptor protein]-L-lysine.. The protein operates within protein modification; protein ubiquitination. Functionally, E3 ubiquitin-protein ligase that promotes the degradation of insoluble ubiquitinated proteins, including insoluble PAX6, poly-Gln repeat expanded HTT and poly-Ala repeat expanded ARX. Mediates PAX6 ubiquitination leading to proteasomal degradation, thereby modulating cortical neurogenesis. May also inhibit PAX6 transcriptional activity, possibly in part by preventing the binding of PAX6 to its consensus sequences. May contribute to the regulation of the intracellular level of HN (humanin) or HN-containing proteins through the proteasomal degradation pathway. Mediates MED15 ubiquitination leading to proteasomal degradation. May contribute to the innate restriction of retroviruses. Upon overexpression, reduces HIV-1 and murine leukemia virus infectivity, by suppressing viral gene expression. Antiviral activity depends on a functional E3 ubiquitin-protein ligase domain. May regulate TRIM5 turnover via the proteasome pathway, thus counteracting the TRIM5-mediated cross-species restriction of retroviral infection at early stages of the retroviral life cycle. Acts as an inhibitor of the AIM2 inflammasome by promoting autophagy-dependent degradation of AIM2. Mechanistically, undergoes autoubiquitination upon DNA stimulation, promoting interaction with AIM2 and SQSTM1/p62, leading to AIM2 recruitment to autophagosomes. This Bos taurus (Bovine) protein is E3 ubiquitin-protein ligase TRIM11 (TRIM11).